The chain runs to 327 residues: Probable cell division protein WhiA (327 aa).

The H-T-H motif DNA-binding region spans 275–308 (SLEELGRLADPPMTKDAVAGRIRRLLSMADRKAK).

It belongs to the WhiA family.

Functionally, involved in cell division and chromosome segregation. The chain is Probable cell division protein WhiA from Mycobacterium marinum (strain ATCC BAA-535 / M).